Here is a 540-residue protein sequence, read N- to C-terminus: Glucose-6-phosphate isomerase (540 aa).

Glutamate 346 acts as the Proton donor in catalysis. Residues histidine 377 and lysine 505 contribute to the active site.

This sequence belongs to the GPI family.

Its subcellular location is the cytoplasm. It catalyses the reaction alpha-D-glucose 6-phosphate = beta-D-fructose 6-phosphate. It participates in carbohydrate biosynthesis; gluconeogenesis. It functions in the pathway carbohydrate degradation; glycolysis; D-glyceraldehyde 3-phosphate and glycerone phosphate from D-glucose: step 2/4. Its function is as follows. Catalyzes the reversible isomerization of glucose-6-phosphate to fructose-6-phosphate. The polypeptide is Glucose-6-phosphate isomerase (Francisella philomiragia subsp. philomiragia (strain ATCC 25017 / CCUG 19701 / FSC 153 / O#319-036)).